Consider the following 275-residue polypeptide: F420-dependent methylenetetrahydromethanopterin dehydrogenase (275 aa).

Belongs to the MTD family.

The enzyme catalyses 5,10-methylenetetrahydromethanopterin + oxidized coenzyme F420-(gamma-L-Glu)(n) + 2 H(+) = 5,10-methenyl-5,6,7,8-tetrahydromethanopterin + reduced coenzyme F420-(gamma-L-Glu)(n). Its pathway is one-carbon metabolism; methanogenesis from CO(2); 5,10-methylene-5,6,7,8-tetrahydromethanopterin from 5,10-methenyl-5,6,7,8-tetrahydromethanopterin (coenzyme F420 route): step 1/1. Functionally, catalyzes the reversible reduction of methenyl-H(4)MPT(+) to methylene-H(4)MPT. The sequence is that of F420-dependent methylenetetrahydromethanopterin dehydrogenase from Methanobrevibacter smithii (strain ATCC 35061 / DSM 861 / OCM 144 / PS).